We begin with the raw amino-acid sequence, 144 residues long: Phospholipase A2 (144 aa).

Residues 1–15 (MKFLVLAALLTAGTA) form the signal peptide. Positions 16 to 22 (ASGVSPT) are cleaved as a propeptide — activation peptide. 7 disulfides stabilise this stretch: cysteine 33–cysteine 99, cysteine 49–cysteine 144, cysteine 51–cysteine 67, cysteine 66–cysteine 127, cysteine 73–cysteine 120, cysteine 83–cysteine 113, and cysteine 106–cysteine 118. Positions 50, 52, and 54 each coordinate Ca(2+). Histidine 70 is a catalytic residue. Aspartate 71 contacts Ca(2+). Residue aspartate 121 is part of the active site.

It belongs to the phospholipase A2 family. Monomer or homodimer. Ca(2+) is required as a cofactor. Activated by trypsin cleavage in the duodenum. Can also be activated by thrombin or autocatalytically.

The protein localises to the secreted. The enzyme catalyses a 1,2-diacyl-sn-glycero-3-phosphocholine + H2O = a 1-acyl-sn-glycero-3-phosphocholine + a fatty acid + H(+). The catalysed reaction is 1,2-ditetradecanoyl-sn-glycero-3-phosphocholine + H2O = 1-tetradecanoyl-sn-glycero-3-phosphocholine + tetradecanoate + H(+). It catalyses the reaction 1,2-dihexadecanoyl-sn-glycero-3-phosphocholine + H2O = 1-hexadecanoyl-sn-glycero-3-phosphocholine + hexadecanoate + H(+). It carries out the reaction 1-hexadecanoyl-2-(9Z-octadecenoyl)-sn-glycero-3-phosphocholine + H2O = 1-hexadecanoyl-sn-glycero-3-phosphocholine + (9Z)-octadecenoate + H(+). The enzyme catalyses 1-hexadecanoyl-2-(5Z,8Z,11Z,14Z-eicosatetraenoyl)-sn-glycero-3-phosphocholine + H2O = 1-hexadecanoyl-sn-glycero-3-phosphocholine + (5Z,8Z,11Z,14Z)-eicosatetraenoate + H(+). The catalysed reaction is 1-hexadecanoyl-2-(9Z-octadecenoyl)-sn-glycero-3-phospho-(1'-sn-glycerol) + H2O = 1-hexadecanoyl-sn-glycero-3-phospho-(1'-sn-glycerol) + (9Z)-octadecenoate + H(+). It catalyses the reaction N-hexadecanoyl-1,2-di-(9Z-octadecenoyl)-sn-glycero-3-phosphoethanolamine + H2O = N-hexadecanoyl-1-(9Z-octadecenoyl)-sn-glycero-3-phosphoethanolamine + (9Z)-octadecenoate + H(+). It carries out the reaction 1-hexadecanoyl-2-(9Z,12Z-octadecadienoyl)-sn-glycero-3-phosphoethanolamine + H2O = 1-hexadecanoyl-sn-glycero-3-phosphoethanolamine + (9Z,12Z)-octadecadienoate + H(+). The enzyme catalyses N,1-dihexadecanoyl-2-(9Z,12Z-octadecadienoyl)-sn-glycero-3-phosphoethanolamine + H2O = N,1-dihexadecanoyl-sn-glycero-3-phosphoethanolamine + (9Z,12Z)-octadecadienoate + H(+). Secretory calcium-dependent phospholipase A2 that primarily targets dietary phospholipids in the intestinal tract. Hydrolyzes the ester bond of the fatty acyl group attached at sn-2 position of phospholipids (phospholipase A2 activity) with preference for phosphatidylethanolamines and phosphatidylglycerols over phosphatidylcholines. May play a role in the biosynthesis of N-acyl ethanolamines that regulate energy metabolism and inflammation in the intestinal tract. Hydrolyzes N-acyl phosphatidylethanolamines to N-acyl lysophosphatidylethanolamines, which are further cleaved by a lysophospholipase D to release N-acyl ethanolamines. May act in an autocrine and paracrine manner. Has anti-helminth activity in a process regulated by gut microbiota. Upon helminth infection of intestinal epithelia, directly affects phosphatidylethanolamine contents in the membrane of helminth larvae, likely controlling an array of phospholipid-mediated cellular processes such as membrane fusion and cell division while providing for better immune recognition, ultimately reducing larvae integrity and infectivity. In Oryctolagus cuniculus (Rabbit), this protein is Phospholipase A2 (PLA2G1B).